The primary structure comprises 372 residues: N-methyl-L-tryptophan oxidase (372 aa).

Position 4–34 (4–34 (DLIIIGSGSVGAAAGYYATRAGLNVLMTDAH)) interacts with FAD. Position 308 is an S-8alpha-FAD cysteine (cysteine 308).

Belongs to the MSOX/MTOX family. MTOX subfamily. Monomer. The cofactor is FAD.

It carries out the reaction N(alpha)-methyl-L-tryptophan + O2 + H2O = L-tryptophan + formaldehyde + H2O2. Catalyzes the oxidative demethylation of N-methyl-L-tryptophan. In Escherichia coli O127:H6 (strain E2348/69 / EPEC), this protein is N-methyl-L-tryptophan oxidase.